The following is a 137-amino-acid chain: Small ribosomal subunit protein uS11 (137 aa).

The disordered stretch occupies residues glutamate 116–valine 137.

The protein belongs to the universal ribosomal protein uS11 family. In terms of assembly, part of the 30S ribosomal subunit.

Located on the platform of the 30S subunit. The protein is Small ribosomal subunit protein uS11 of Pyrococcus abyssi (strain GE5 / Orsay).